The sequence spans 420 residues: ATP phosphoribosyltransferase regulatory subunit (420 aa).

The protein belongs to the class-II aminoacyl-tRNA synthetase family. HisZ subfamily. Heteromultimer composed of HisG and HisZ subunits.

Its subcellular location is the cytoplasm. It participates in amino-acid biosynthesis; L-histidine biosynthesis; L-histidine from 5-phospho-alpha-D-ribose 1-diphosphate: step 1/9. Its function is as follows. Required for the first step of histidine biosynthesis. May allow the feedback regulation of ATP phosphoribosyltransferase activity by histidine. This is ATP phosphoribosyltransferase regulatory subunit from Bacillus anthracis (strain A0248).